A 412-amino-acid chain; its full sequence is Interferon-inducible GTPase 5 (412 aa).

Residues 51–234 (TRLEVGVTGE…PMLVTTWEHD (184 aa)) enclose the IRG-type G domain. GTP is bound by residues 60-67 (ESGAGKSS), 85-89 (TGVVE), and 215-217 (SNL). 2 positions are modified to phosphoserine: serine 246 and serine 303.

Belongs to the TRAFAC class dynamin-like GTPase superfamily. IRG family. As to quaternary structure, interacts with PLIN2/ADRP and COX4I1/COXIV. As to expression, expressed in spermatozoa tails from the testis and epididymis, where it may be a component of the fibrous sheath (at protein level).

It is found in the cell projection. It localises to the cilium. The protein resides in the flagellum. Its subcellular location is the lipid droplet. The catalysed reaction is GTP + H2O = GDP + phosphate + H(+). Functionally, required for sperm motility and therefore male fertility, via positive regulation of spermatozoa fibrous sheath formation. The chain is Interferon-inducible GTPase 5 from Mus musculus (Mouse).